The primary structure comprises 336 residues: Aspartate--ammonia ligase (336 aa).

The protein belongs to the class-II aminoacyl-tRNA synthetase family. AsnA subfamily.

It is found in the cytoplasm. It catalyses the reaction L-aspartate + NH4(+) + ATP = L-asparagine + AMP + diphosphate + H(+). The protein operates within amino-acid biosynthesis; L-asparagine biosynthesis; L-asparagine from L-aspartate (ammonia route): step 1/1. The protein is Aspartate--ammonia ligase of Clostridium perfringens (strain ATCC 13124 / DSM 756 / JCM 1290 / NCIMB 6125 / NCTC 8237 / Type A).